We begin with the raw amino-acid sequence, 1235 residues long: DNA polymerase catalytic subunit (1235 aa).

Disordered regions lie at residues 640–691 and 1098–1134; these read QGRF…ETAG and AAAP…ASKP. Basic and acidic residues predominate over residues 650-661; the sequence is APKRPAAAREDE. The span at 662–675 shows a compositional bias: acidic residues; it reads ERPEEEGEDEDERE. A compositionally biased stretch (basic and acidic residues) spans 676 to 691; sequence EGGGEREPDGARETAG.

Belongs to the DNA polymerase type-B family. Forms a complex with the ssDNA-binding protein UL29, the DNA polymerase processivity factor, and the alkaline exonuclease. Interacts with the putative helicase-primase complex subunit UL8; this interaction may coordinate leading and lagging strand DNA synthesis at the replication fork.

It is found in the host nucleus. The enzyme catalyses DNA(n) + a 2'-deoxyribonucleoside 5'-triphosphate = DNA(n+1) + diphosphate. It catalyses the reaction Endonucleolytic cleavage to 5'-phosphomonoester.. In terms of biological role, replicates viral genomic DNA. The replication complex is composed of six viral proteins: the DNA polymerase, processivity factor, primase, primase-associated factor, helicase, and ssDNA-binding protein. Additionally, the polymerase contains an intrinsic ribonuclease H (RNase H) activity that specifically degrades RNA/DNA heteroduplexes or duplex DNA substrates in the 5' to 3' direction. Therefore, it can catalyze the excision of the RNA primers that initiate the synthesis of Okazaki fragments at a replication fork during viral DNA replication. This chain is DNA polymerase catalytic subunit, found in Homo sapiens (Human).